Reading from the N-terminus, the 515-residue chain is ATP-dependent rRNA helicase rrp-3 (515 aa).

The tract at residues 1-85 (MSTKRRKTSD…LDVAPEQEEV (85 aa)) is disordered. A compositionally biased stretch (low complexity) spans 15–24 (LKKAAAPSAP). Positions 25–55 (ELKKEKKVKDKSTKDKSSTKKTEKTEKKQDA) are enriched in basic and acidic residues. Acidic residues predominate over residues 69–85 (TEEDSVTLDVAPEQEEV). Positions 90–118 (KTFKDLGIVDALCEACERLGYKNPTPIQE) match the Q motif motif. Residues 121-292 (IPLALQNRDI…RASLRDPLKV (172 aa)) enclose the Helicase ATP-binding domain. 134–141 (AETGSGKT) serves as a coordination point for ATP. Residues 240–243 (DEAD) carry the DEAD box motif. The region spanning 316–464 (HKDTYLVYLC…EYPLEKDEVM (149 aa)) is the Helicase C-terminal domain. The tract at residues 482–515 (KSLMENQGKHGGLLKRKRGNGQGGGRDHMDAEEG) is disordered. Over residues 506–515 (GRDHMDAEEG) the composition is skewed to basic and acidic residues.

Belongs to the DEAD box helicase family. DDX47/RRP3 subfamily.

The protein resides in the nucleus. Functionally, required for pre-ribosomal RNA processing. Involved in the maturation of the 35S-pre-rRNA and to its cleavage to mature 18S rRNA. The polypeptide is ATP-dependent rRNA helicase rrp-3 (rrp-3) (Neurospora crassa (strain ATCC 24698 / 74-OR23-1A / CBS 708.71 / DSM 1257 / FGSC 987)).